The chain runs to 364 residues: Chorismate synthase (364 aa).

Residues Arg-48 and Arg-54 each contribute to the NADP(+) site. FMN is bound by residues 125-127 (RSS), 238-239 (NA), Gly-278, 293-297 (KPTSS), and Arg-319.

The protein belongs to the chorismate synthase family. As to quaternary structure, homotetramer. Requires FMNH2 as cofactor.

The catalysed reaction is 5-O-(1-carboxyvinyl)-3-phosphoshikimate = chorismate + phosphate. The protein operates within metabolic intermediate biosynthesis; chorismate biosynthesis; chorismate from D-erythrose 4-phosphate and phosphoenolpyruvate: step 7/7. Its function is as follows. Catalyzes the anti-1,4-elimination of the C-3 phosphate and the C-6 proR hydrogen from 5-enolpyruvylshikimate-3-phosphate (EPSP) to yield chorismate, which is the branch point compound that serves as the starting substrate for the three terminal pathways of aromatic amino acid biosynthesis. This reaction introduces a second double bond into the aromatic ring system. In Shewanella loihica (strain ATCC BAA-1088 / PV-4), this protein is Chorismate synthase.